Here is a 142-residue protein sequence, read N- to C-terminus: Membrane protein YneK (142 aa).

The helical transmembrane segment at 6-26 (FLWFILFWVIMMVVLLSIGGF) threads the bilayer.

Interacts with the N-terminal D1 domain of dynamin-like protein DynA.

It localises to the cell membrane. This chain is Membrane protein YneK (yneK), found in Bacillus subtilis (strain 168).